Consider the following 256-residue polypeptide: Mannose-specific lectin 1 (256 aa).

Positions 1 to 23 (MAKLLLFLLPAILGLLVPRSAVA) are cleaved as a signal peptide. 2 Bulb-type lectin domains span residues 26 to 131 (TNYL…PWVR) and 145 to 252 (NNLL…SKRS). Beta-D-mannose contacts are provided by residues 51 to 55 (QDDCN), tyrosine 59, tryptophan 63, glutamine 64, 170 to 174 (QGDCN), tyrosine 178, and 182 to 185 (YGWQ). The Carbohydrate-binding motif 1 signature appears at 51–59 (QDDCNLVLY). 2 disulfides stabilise this stretch: cysteine 54–cysteine 74 and cysteine 173–cysteine 195. The Carbohydrate-binding motif 2 signature appears at 170-178 (QGDCNLVLY).

Forms heterodimers.

The protein resides in the secreted. Mannose-specific lectin. Shows agglutinating activity towards erythrocytes from rabbit. The chain is Mannose-specific lectin 1 from Remusatia vivipara (Hitchhiker elephant ear).